The primary structure comprises 430 residues: Serine--tRNA ligase (430 aa).

An L-serine-binding site is contributed by 237-239 (TAE). 268–270 (RSE) is a binding site for ATP. An L-serine-binding site is contributed by Glu-291. Position 355–358 (355–358 (EISS)) interacts with ATP. Ser-391 lines the L-serine pocket.

Belongs to the class-II aminoacyl-tRNA synthetase family. Type-1 seryl-tRNA synthetase subfamily. As to quaternary structure, homodimer. The tRNA molecule binds across the dimer.

It localises to the cytoplasm. It carries out the reaction tRNA(Ser) + L-serine + ATP = L-seryl-tRNA(Ser) + AMP + diphosphate + H(+). It catalyses the reaction tRNA(Sec) + L-serine + ATP = L-seryl-tRNA(Sec) + AMP + diphosphate + H(+). The protein operates within aminoacyl-tRNA biosynthesis; selenocysteinyl-tRNA(Sec) biosynthesis; L-seryl-tRNA(Sec) from L-serine and tRNA(Sec): step 1/1. In terms of biological role, catalyzes the attachment of serine to tRNA(Ser). Is also able to aminoacylate tRNA(Sec) with serine, to form the misacylated tRNA L-seryl-tRNA(Sec), which will be further converted into selenocysteinyl-tRNA(Sec). The polypeptide is Serine--tRNA ligase (Escherichia coli O139:H28 (strain E24377A / ETEC)).